Consider the following 400-residue polypeptide: Acetyl-CoA decarbonylase/synthase complex subunit delta (400 aa).

It belongs to the CdhD family. As to quaternary structure, heterodimer of delta and gamma chains. The ACDS complex is made up of alpha, epsilon, beta, gamma and delta chains with a probable stoichiometry of (alpha(2)epsilon(2))(4)-beta(8)-(gamma(1)delta(1))(8).

Its function is as follows. Part of a complex that catalyzes the reversible cleavage of acetyl-CoA, allowing autotrophic growth from CO(2). Probably maintains the overall quaternary structure of the ACDS complex. The sequence is that of Acetyl-CoA decarbonylase/synthase complex subunit delta from Methanopyrus kandleri (strain AV19 / DSM 6324 / JCM 9639 / NBRC 100938).